Consider the following 185-residue polypeptide: MIEASKLRAGMTFEAEGKLIRVLEASHHKPGKGNTIMRMKLRDVRTGSTFDTTYRPDEKFEQAIIETVPAQYLYKMDETAYFMNTETYDQYEIPVANVEQELLYILENSDVKIQFYGTEVIGVQVPTTVELTVTETQPSIKGATVTGSGKPATLETGLVVNVPDFIEVGQKLIINTAEGTYVSRA.

It belongs to the elongation factor P family.

Its subcellular location is the cytoplasm. It functions in the pathway protein biosynthesis; polypeptide chain elongation. Its function is as follows. Involved in peptide bond synthesis. Stimulates efficient translation and peptide-bond synthesis on native or reconstituted 70S ribosomes in vitro. Probably functions indirectly by altering the affinity of the ribosome for aminoacyl-tRNA, thus increasing their reactivity as acceptors for peptidyl transferase. The polypeptide is Elongation factor P (Streptococcus equi subsp. equi (strain 4047)).